Consider the following 440-residue polypeptide: MSKTPTVGFVSLGCPKATVDSERILTQLRMEGYQIVPSYEDADVVVVNTCGFIDSAKAESLDAIGEAIAENGKVIVTGCMGVDENNIRGVHPSVLAVTGPQQYEQVVNAVHEVVPPSIEHDPFVDLVPPQGIKLTPRHYAYLKISEGCNHSCSFCIIPSMRGKLVSRPVGDVLSEAERLVKAGVKEVLVISQDTSAYGVDLKYKLDFWNGQPVKTRMLELCEELGKMGVWVRLHYVYPYPNVDDVIPLMAAGKILPYLDIPFQHASPKVLKAMKRPAFEDKTLARIKKWREICPELTIRSTFIVGFPGETEEDFQYLLDWLTEAQLDRVGCFQYSPVDGAPAEAMNLEPVPDEIKQDRWDRFMAHQQAISAARLQLKVGKELDVLIDEVDEDGAIGRSWADAPEIDGMVYVDSEQPLQPGDKVRVRVTNADEYDLWAEVI.

Residues 5-115 (PTVGFVSLGC…VVNAVHEVVP (111 aa)) form the MTTase N-terminal domain. [4Fe-4S] cluster contacts are provided by Cys14, Cys50, Cys79, Cys148, Cys152, and Cys155. Residues 134–372 (LTPRHYAYLK…MAHQQAISAA (239 aa)) enclose the Radical SAM core domain. The region spanning 375-440 (QLKVGKELDV…DEYDLWAEVI (66 aa)) is the TRAM domain.

Belongs to the methylthiotransferase family. RimO subfamily. Requires [4Fe-4S] cluster as cofactor.

Its subcellular location is the cytoplasm. It carries out the reaction L-aspartate(89)-[ribosomal protein uS12]-hydrogen + (sulfur carrier)-SH + AH2 + 2 S-adenosyl-L-methionine = 3-methylsulfanyl-L-aspartate(89)-[ribosomal protein uS12]-hydrogen + (sulfur carrier)-H + 5'-deoxyadenosine + L-methionine + A + S-adenosyl-L-homocysteine + 2 H(+). Catalyzes the methylthiolation of an aspartic acid residue of ribosomal protein uS12. The protein is Ribosomal protein uS12 methylthiotransferase RimO of Stutzerimonas stutzeri (strain A1501) (Pseudomonas stutzeri).